The following is a 394-amino-acid chain: Deoxyguanosinetriphosphate triphosphohydrolase-like protein (394 aa).

Positions methionine 1–threonine 34 are disordered. The segment covering aspartate 16–threonine 34 has biased composition (basic and acidic residues). Residues arginine 70 to asparagine 210 form the HD domain.

The protein belongs to the dGTPase family. Type 2 subfamily.

This Caulobacter sp. (strain K31) protein is Deoxyguanosinetriphosphate triphosphohydrolase-like protein.